Consider the following 635-residue polypeptide: Threonine--tRNA ligase (635 aa).

The TGS domain maps to 1-61; that stretch reads MIKITLKDGK…HKDSSLEILT (61 aa). The segment at 242–532 is catalytic; it reads DHRKLGKELD…LIEQYAGAFP (291 aa). C333, H384, and H509 together coordinate Zn(2+).

The protein belongs to the class-II aminoacyl-tRNA synthetase family. As to quaternary structure, homodimer. Zn(2+) is required as a cofactor.

It localises to the cytoplasm. It carries out the reaction tRNA(Thr) + L-threonine + ATP = L-threonyl-tRNA(Thr) + AMP + diphosphate + H(+). Catalyzes the attachment of threonine to tRNA(Thr) in a two-step reaction: L-threonine is first activated by ATP to form Thr-AMP and then transferred to the acceptor end of tRNA(Thr). Also edits incorrectly charged L-seryl-tRNA(Thr). This is Threonine--tRNA ligase from Clostridium botulinum (strain Langeland / NCTC 10281 / Type F).